A 360-amino-acid chain; its full sequence is DNA polymerase IV (360 aa).

The region spanning 9-191 (IMHLDIDAFY…LNINKIPYIG (183 aa)) is the UmuC domain. Asp13 and Asp108 together coordinate Mg(2+). Glu109 is a catalytic residue.

It belongs to the DNA polymerase type-Y family. As to quaternary structure, monomer. It depends on Mg(2+) as a cofactor.

It is found in the cytoplasm. It catalyses the reaction DNA(n) + a 2'-deoxyribonucleoside 5'-triphosphate = DNA(n+1) + diphosphate. In terms of biological role, poorly processive, error-prone DNA polymerase involved in untargeted mutagenesis. Copies undamaged DNA at stalled replication forks, which arise in vivo from mismatched or misaligned primer ends. These misaligned primers can be extended by PolIV. Exhibits no 3'-5' exonuclease (proofreading) activity. May be involved in translesional synthesis, in conjunction with the beta clamp from PolIII. The chain is DNA polymerase IV from Ureaplasma parvum serovar 3 (strain ATCC 27815 / 27 / NCTC 11736).